Reading from the N-terminus, the 541-residue chain is Probable inorganic phosphate transporter 1-12 (541 aa).

Residues 1–26 (MGRQDQQLQVLNALDAAKTQWYHFTA) lie on the Cytoplasmic side of the membrane. The chain crosses the membrane as a helical span at residues 27–47 (IIVAGMGFFTDAYDLFCISLV). Over 48–70 (TKLLGRIYYTDPASPTPGSLPPN) the chain is Extracellular. The helical transmembrane segment at 71-91 (IAAAVNGVALCGTLSGQLFFG) threads the bilayer. Over 92 to 100 (WLGDKLGRK) the chain is Cytoplasmic. The chain crosses the membrane as a helical span at residues 101-121 (SVYGMTLLLMVICSIASGLSF). Residues 122-124 (SHT) are Extracellular-facing. Residues 125–145 (PTSVMATLCFFRFWLGFGIGG) form a helical membrane-spanning segment. Residues 146–163 (DYPLSATIMSEYANKKTR) lie on the Cytoplasmic side of the membrane. The chain crosses the membrane as a helical span at residues 164–184 (GAFIAAVFAMQGFGILAGGVV). Residues 185 to 213 (TLAMSAGFQAAFPAPAYEVNAAASTVPQA) are Extracellular-facing. A helical membrane pass occupies residues 214–234 (DYVWRIILMLGALPAILTYYW). Topologically, residues 235-297 (RMKMPETARY…ARFAKRHGAH (63 aa)) are cytoplasmic. The helical transmembrane segment at 298 to 318 (LLGTAATWFLVDVAYYSQNLF) threads the bilayer. At 319 to 349 (QKDIFTSIHWIPKARTMSELEEVFRISRAQT) the chain is on the extracellular side. Residues 350–370 (LIALCGTVPGYWFTVFLIDII) traverse the membrane as a helical segment. The Cytoplasmic segment spans residues 371-374 (GRFK). A helical membrane pass occupies residues 375-395 (IQLLGFAGMTAFMLGLAIPYH). The Extracellular segment spans residues 396–403 (HWTMPGNQ). The helical transmembrane segment at 404–424 (VIFVFLYGFTFFFANFGPNAT) threads the bilayer. At 425–443 (TFIVPAEIFPARLRSTCHG) the chain is on the cytoplasmic side. Residues 444-464 (ISAASGKAGAIIGAFGFLYAA) traverse the membrane as a helical segment. The Extracellular portion of the chain corresponds to 465–484 (QPQDKAHVDAGYKPGIGVRN). Residues 485 to 505 (ALFVLAGCNLVGFLMTWMLVP) form a helical membrane-spanning segment. Residues 506-541 (ESKGKSLEEMSGEADDEEASANGGATAVNSSGVEMV) are Cytoplasmic-facing. Residues 512–541 (LEEMSGEADDEEASANGGATAVNSSGVEMV) are disordered. Residues 515–524 (MSGEADDEEA) show a composition bias toward acidic residues. Polar residues predominate over residues 532–541 (AVNSSGVEMV).

The protein belongs to the major facilitator superfamily. Phosphate:H(+) symporter (TC 2.A.1.9) family.

Its subcellular location is the membrane. Functionally, high-affinity transporter for external inorganic phosphate. The polypeptide is Probable inorganic phosphate transporter 1-12 (PHT1-12) (Oryza sativa subsp. japonica (Rice)).